The following is a 145-amino-acid chain: Small ribosomal subunit protein uS19 (145 aa).

Position 2 is an N-acetylalanine (Ala2). A Glycyl lysine isopeptide (Lys-Gly) (interchain with G-Cter in SUMO2) cross-link involves residue Lys108.

Belongs to the universal ribosomal protein uS19 family. As to quaternary structure, component of the small ribosomal subunit.

The protein resides in the cytoplasm. In terms of biological role, component of the small ribosomal subunit. The ribosome is a large ribonucleoprotein complex responsible for the synthesis of proteins in the cell. This chain is Small ribosomal subunit protein uS19 (RPS15), found in Oryctolagus cuniculus (Rabbit).